The primary structure comprises 319 residues: Thiamine-monophosphate kinase (319 aa).

Mg(2+) is bound by residues aspartate 28, threonine 43, threonine 44, and aspartate 45. Substrate is bound at residue histidine 52. Aspartate 73 serves as a coordination point for Mg(2+). ATP contacts are provided by residues tyrosine 104, glycine 121–aspartate 122, and arginine 145. Aspartate 122 lines the Mg(2+) pocket. Aspartate 218 contacts Mg(2+). Serine 220 lines the ATP pocket. Aspartate 221 lines the Mg(2+) pocket. Substrate is bound by residues glutamate 268 and tyrosine 315.

Belongs to the thiamine-monophosphate kinase family.

The catalysed reaction is thiamine phosphate + ATP = thiamine diphosphate + ADP. It participates in cofactor biosynthesis; thiamine diphosphate biosynthesis; thiamine diphosphate from thiamine phosphate: step 1/1. Its function is as follows. Catalyzes the ATP-dependent phosphorylation of thiamine-monophosphate (TMP) to form thiamine-pyrophosphate (TPP), the active form of vitamin B1. This chain is Thiamine-monophosphate kinase, found in Methanocaldococcus jannaschii (strain ATCC 43067 / DSM 2661 / JAL-1 / JCM 10045 / NBRC 100440) (Methanococcus jannaschii).